The chain runs to 246 residues: 4-hydroxy-tetrahydrodipicolinate reductase (246 aa).

Residues 8-13 (GALGRM), Asp-34, 74-76 (GTT), and 101-104 (APNF) contribute to the NAD(+) site. The active-site Proton donor/acceptor is His-131. Residue His-132 coordinates (S)-2,3,4,5-tetrahydrodipicolinate. The Proton donor role is filled by Lys-135. 141-142 (GT) serves as a coordination point for (S)-2,3,4,5-tetrahydrodipicolinate.

This sequence belongs to the DapB family.

It is found in the cytoplasm. It carries out the reaction (S)-2,3,4,5-tetrahydrodipicolinate + NAD(+) + H2O = (2S,4S)-4-hydroxy-2,3,4,5-tetrahydrodipicolinate + NADH + H(+). It catalyses the reaction (S)-2,3,4,5-tetrahydrodipicolinate + NADP(+) + H2O = (2S,4S)-4-hydroxy-2,3,4,5-tetrahydrodipicolinate + NADPH + H(+). It participates in amino-acid biosynthesis; L-lysine biosynthesis via DAP pathway; (S)-tetrahydrodipicolinate from L-aspartate: step 4/4. Its function is as follows. Catalyzes the conversion of 4-hydroxy-tetrahydrodipicolinate (HTPA) to tetrahydrodipicolinate. The protein is 4-hydroxy-tetrahydrodipicolinate reductase of Thermobifida fusca (strain YX).